A 61-amino-acid chain; its full sequence is MLNIFSLIWICLNSALYSSGFFFGKLPEAYAFLNPIIDFMPVIPVFFFLLAFVWQAAVSFR.

Residues 1–24 (MLNIFSLIWICLNSALYSSGFFFG) constitute a propeptide that is removed on maturation. A helical membrane pass occupies residues 36 to 56 (IIDFMPVIPVFFFLLAFVWQA).

This sequence belongs to the PsbK family. PSII is composed of 1 copy each of membrane proteins PsbA, PsbB, PsbC, PsbD, PsbE, PsbF, PsbH, PsbI, PsbJ, PsbK, PsbL, PsbM, PsbT, PsbX, PsbY, PsbZ, Psb30/Ycf12, at least 3 peripheral proteins of the oxygen-evolving complex and a large number of cofactors. It forms dimeric complexes.

The protein resides in the plastid. Its subcellular location is the chloroplast thylakoid membrane. Functionally, one of the components of the core complex of photosystem II (PSII). PSII is a light-driven water:plastoquinone oxidoreductase that uses light energy to abstract electrons from H(2)O, generating O(2) and a proton gradient subsequently used for ATP formation. It consists of a core antenna complex that captures photons, and an electron transfer chain that converts photonic excitation into a charge separation. This Coffea arabica (Arabian coffee) protein is Photosystem II reaction center protein K.